We begin with the raw amino-acid sequence, 1012 residues long: Tolloid-like protein 2 (1012 aa).

The signal sequence occupies residues 1–21 (MPLATTLGTLVLLLLLPLPRG). Residues 22-146 (AEVTGDHSNV…AKTFSARVRR (125 aa)) constitute a propeptide that is removed on maturation. Residues 83 to 135 (KPSIDKPGHDTGGLEETSARWPNDTASNASIQAPRKDGKDATTFLPNPGTSNT) are disordered. Positions 126 to 135 (FLPNPGTSNT) are enriched in polar residues. The Peptidase M12A domain occupies 146–346 (RATTSRTERI…AQARKLYKCP (201 aa)). An N-linked (GlcNAc...) asparagine glycan is attached at Asn-168. 4 disulfides stabilise this stretch: Cys-189–Cys-345, Cys-209–Cys-231, Cys-211–Cys-212, and Cys-348–Cys-374. His-239 contacts Zn(2+). Residue Glu-240 is part of the active site. The Zn(2+) site is built by His-243 and His-249. CUB domains are found at residues 348-460 (CGET…YEAM) and 461-573 (CGGD…FFKE). N-linked (GlcNAc...) asparagine glycosylation is found at Asn-358 and Asn-389. Intrachain disulfides connect Cys-401/Cys-423, Cys-461/Cys-487, Cys-514/Cys-536, Cys-577/Cys-589, Cys-585/Cys-598, Cys-600/Cys-613, Cys-617/Cys-643, Cys-670/Cys-692, Cys-733/Cys-744, Cys-740/Cys-753, Cys-755/Cys-768, and Cys-773/Cys-799. One can recognise an EGF-like 1; calcium-binding domain in the interval 573 to 614 (EVDECSWPDHGGCEQRCVNTLGSYTCACDPGYELAADKKTCE). The 113-residue stretch at 617-729 (CGGFITKLNG…RGFRAHFFSD (113 aa)) folds into the CUB 3 domain. A glycan (N-linked (GlcNAc...) asparagine) is linked at Asn-625. One can recognise an EGF-like 2; calcium-binding domain in the interval 729 to 769 (DKDECAKDNGGCQQECVNTFGSYLCRCRNGYRLHENGHDCK). CUB domains lie at 773 to 885 (CAYK…HSTE) and 886 to 1002 (CGGR…YTST). N-linked (GlcNAc...) asparagine glycosylation is present at Asn-802. 3 disulfides stabilise this stretch: Cys-826-Cys-848, Cys-886-Cys-916, and Cys-943-Cys-965. Omega-N-methylarginine occurs at positions 960 and 963.

Zn(2+) serves as cofactor.

The protein localises to the secreted. Functionally, protease which specifically processes pro-lysyl oxidase. Required for the embryonic development. Predominant protease, which in the development, influences dorsal-ventral patterning and skeletogenesis. The chain is Tolloid-like protein 2 (Tll2) from Mus musculus (Mouse).